Consider the following 708-residue polypeptide: Metal-pseudopaline receptor CntO (708 aa).

A signal peptide spans 1–21 (MRVSVSLVLGVGLGCSSPALW). Residues 63–169 (RIEDIPQAIS…PGGTVNLVTK (107 aa)) enclose the TBDR plug domain. One can recognise a TBDR beta-barrel domain in the interval 174–708 (ERFARLHASA…NLTMSLTLNY (535 aa)).

Belongs to the TonB-dependent receptor family.

It is found in the cell outer membrane. Functionally, transports the metallophore pseudopaline, which is involved in the acquisition of nickel and zinc, and thus enables bacterial growth inside the host, where metal access is limited. Is probably involved in the import of pseudopaline-metal complexes. The sequence is that of Metal-pseudopaline receptor CntO from Pseudomonas aeruginosa (strain ATCC 15692 / DSM 22644 / CIP 104116 / JCM 14847 / LMG 12228 / 1C / PRS 101 / PAO1).